Reading from the N-terminus, the 687-residue chain is Polyphosphate kinase (687 aa).

Asn45 lines the ATP pocket. 2 residues coordinate Mg(2+): Arg375 and Arg405. The active-site Phosphohistidine intermediate is the His435. ATP contacts are provided by Tyr472, Arg568, and His596.

The protein belongs to the polyphosphate kinase 1 (PPK1) family. The cofactor is Mg(2+). In terms of processing, an intermediate of this reaction is the autophosphorylated ppk in which a phosphate is covalently linked to a histidine residue through a N-P bond.

The enzyme catalyses [phosphate](n) + ATP = [phosphate](n+1) + ADP. Catalyzes the reversible transfer of the terminal phosphate of ATP to form a long-chain polyphosphate (polyP). The polypeptide is Polyphosphate kinase (Burkholderia lata (strain ATCC 17760 / DSM 23089 / LMG 22485 / NCIMB 9086 / R18194 / 383)).